The sequence spans 1250 residues: DNA topoisomerase 3-alpha (1250 aa).

Residues 27 to 171 (KYLNVAEKND…NISVYRATFS (145 aa)) enclose the Toprim domain. Positions 189–610 (DKRQSDAVDV…EQIAKYKQAY (422 aa)) constitute a Topo IA-type catalytic domain. Y356 functions as the O-(5'-phospho-DNA)-tyrosine intermediate in the catalytic mechanism. Residues 769-835 (RGGGGGPGPG…GTGGGGLGGG (67 aa)) show a composition bias toward gly residues. Disordered regions lie at residues 769–899 (RGGG…GLDE) and 953–1035 (NGGT…TVLC). Residues 840–865 (PGGESKKSATKKPPNEPKPKKTKEPK) show a composition bias toward basic and acidic residues. Residues 866 to 886 (AAPNKKTSSKSSGSIRSFFTS) show a composition bias toward low complexity. Positions 956–965 (TMPTESNGDQ) are enriched in polar residues. 2 stretches are compositionally biased toward basic and acidic residues: residues 966 to 994 (QLDK…RERA) and 1012 to 1021 (PRWDSVERDS). The span at 1022-1033 (TPPSSVPESETV) shows a compositional bias: low complexity. The Zn(2+) site is built by C1035, C1038, C1061, and C1067. The GRF-type 1 zinc finger occupies 1035 to 1076 (CTGCQQPARQNTVRKNGPNLGRLYYKCPKPDECNFFQWADEP). The segment at 1069–1150 (FFQWADEPPS…TATPGDGEEV (82 aa)) is disordered. A compositionally biased stretch (polar residues) spans 1079 to 1101 (SAKSKNSTGSAPQSTTSWGSNRV). Low complexity predominate over residues 1106–1134 (SIQQSNSQRGQSSMRSNSSSTVTITQTKT). C1152, C1154, C1177, and C1184 together coordinate Zn(2+). The GRF-type 2 zinc-finger motif lies at 1152–1193 (CNCGQLASQLTVRKDGPNQGRPFYACPTREKSCGFFKWGDED). Residues 1188–1231 (KWGDEDQNQGASSTSWGSANRNPPGRSQPTAITSDGPKTRRCGL) form a disordered region. A compositionally biased stretch (polar residues) spans 1195-1220 (NQGASSTSWGSANRNPPGRSQPTAIT).

It belongs to the type IA topoisomerase family.

The enzyme catalyses ATP-independent breakage of single-stranded DNA, followed by passage and rejoining.. In terms of biological role, releases the supercoiling and torsional tension of DNA introduced during the DNA replication and transcription by transiently cleaving and rejoining one strand of the DNA duplex. Introduces a single-strand break via transesterification at a target site in duplex DNA. The scissile phosphodiester is attacked by the catalytic tyrosine of the enzyme, resulting in the formation of a DNA-(5'-phosphotyrosyl)-enzyme intermediate and the expulsion of a 3'-OH DNA strand. The free DNA strand than undergoes passage around the unbroken strand thus removing DNA supercoils. Finally, in the religation step, the DNA 3'-OH attacks the covalent intermediate to expel the active-site tyrosine and restore the DNA phosphodiester backbone. Weakly relaxes negative supercoils and displays a distinct preference for binding single-stranded DNA. The polypeptide is DNA topoisomerase 3-alpha (Top3alpha) (Drosophila melanogaster (Fruit fly)).